Here is a 320-residue protein sequence, read N- to C-terminus: Zinc finger protein 330 (320 aa).

Positions 1–23 (MPKKKTGARKKAENRREREKQLR) are disordered. A Nuclear localization signal motif is present at residues 3–11 (KKKTGARKK). Residues 10-22 (KKAENRREREKQL) are compositionally biased toward basic and acidic residues. 4 C4-type zinc fingers span residues 42–58 (CDKCQRRQKNRAFCYFC), 67–104 (CAQCGKTKCMMKSSDCVIKHAGVYSTGLAMVGAICDFC), 129–149 (CVECERGVWDHGGRIFSCSFC), and 175–189 (CVSCNRLGQHSCLRC). The disordered stretch occupies residues 206-320 (EKGKQPPCPK…GYAHYEEQEN (115 aa)). Residues 216–225 (CGHETQETKD) are compositionally biased toward basic and acidic residues. Positions 269–285 (DEEEDEYEAEDDEEEED) are enriched in acidic residues. The residue at position 291 (S291) is a Phosphoserine.

The protein belongs to the NOA36 family. Widely expressed. Higher expression seen in heart and skeletal muscle.

The protein localises to the nucleus. It is found in the nucleolus. It localises to the chromosome. Its subcellular location is the centromere. This chain is Zinc finger protein 330 (ZNF330), found in Homo sapiens (Human).